Here is a 185-residue protein sequence, read N- to C-terminus: MSQVKLNLIAAACDNMGIGVNGALPWRLKKEMAYFTTMTSKVSEPTKVNAVIMGRRTWDCIPDKYRPLQDRVNIVLTHNVDSVKENVPEGVMVFPGLDEAIKYIEGREDIESTWVIGGSSIYRAAMTHPNCGKIYLTEIQKSFDCDTFFPNIDKQQFHLVDEEQIPGEKQVEGNISYYFRVYKKL.

The 180-residue stretch at 5–184 (KLNLIAAACD…ISYYFRVYKK (180 aa)) folds into the DHFR domain. NADP(+) contacts are provided by residues A11 and 17 to 23 (GIGVNGA). Residue 31–36 (EMAYFT) coordinates substrate. Residue 55–57 (RRT) participates in NADP(+) binding. R71 lines the substrate pocket. NADP(+)-binding positions include 77-79 (THN) and 117-124 (GGSSIYRA).

This sequence belongs to the dihydrofolate reductase family.

The enzyme catalyses (6S)-5,6,7,8-tetrahydrofolate + NADP(+) = 7,8-dihydrofolate + NADPH + H(+). It participates in cofactor biosynthesis; tetrahydrofolate biosynthesis; 5,6,7,8-tetrahydrofolate from 7,8-dihydrofolate: step 1/1. Activated by dithiothreitol and p-chloromercuribenzoate. Inhibited by trimethoprim, methotrexate, sodium tetrathionate and hydroxymercuribenzoate. Key enzyme in folate metabolism. Catalyzes an essential reaction for de novo glycine and purine synthesis, and for DNA precursor synthesis. The polypeptide is Dihydrofolate reductase (DHFR) (Heliothis virescens (Tobacco budworm moth)).